Reading from the N-terminus, the 379-residue chain is Glutamate 5-kinase (379 aa).

Residue lysine 20 coordinates ATP. Substrate contacts are provided by serine 59, aspartate 146, and asparagine 158. 220 to 226 (SGGMYSK) is an ATP binding site. The PUA domain occupies 285–362 (TGSVVVDDGA…AELTAILGDN (78 aa)).

It belongs to the glutamate 5-kinase family.

Its subcellular location is the cytoplasm. The catalysed reaction is L-glutamate + ATP = L-glutamyl 5-phosphate + ADP. Its pathway is amino-acid biosynthesis; L-proline biosynthesis; L-glutamate 5-semialdehyde from L-glutamate: step 1/2. Catalyzes the transfer of a phosphate group to glutamate to form L-glutamate 5-phosphate. This is Glutamate 5-kinase from Oleidesulfovibrio alaskensis (strain ATCC BAA-1058 / DSM 17464 / G20) (Desulfovibrio alaskensis).